Consider the following 203-residue polypeptide: RNA annealing protein YRA2 (203 aa).

N-acetylmethionine is present on M1. Disordered stretches follow at residues 1 to 60 (MDKA…REEP) and 137 to 203 (QPQR…YMKG). Polar residues predominate over residues 11-20 (NSHTDSSSNH). The span at 47–60 (SRSKDRLYREREEP) shows a compositional bias: basic and acidic residues. Residues 64–138 (KRIRISKIPL…AKIEVEIYQP (75 aa)) enclose the RRM domain. 2 stretches are compositionally biased toward basic residues: residues 139–153 (QRKH…RRKQ) and 161–180 (GRPG…KNKG).

Belongs to the YRA1 family. Associates with mRNPs. Interacts with YRA1.

The protein resides in the nucleus. Involved in export of poly(A) mRNAs from the nucleus. Recruited to the coding sequences as well as poly-A sites of active genes. The protein is RNA annealing protein YRA2 (YRA2) of Saccharomyces cerevisiae (strain JAY291) (Baker's yeast).